A 918-amino-acid chain; its full sequence is E3 ubiquitin-protein ligase CBL-B-A (918 aa).

Over residues 1–18 (MASGSGSSSSTSSSALSG) the composition is skewed to low complexity. The tract at residues 1 to 27 (MASGSGSSSSTSSSALSGRLPGSRSAN) is disordered. A 4H region spans residues 46 to 178 (PPKQAAADRR…KAIFPSGQFQ (133 aa)). In terms of domain architecture, Cbl-PTB spans 46–354 (PPKQAAADRR…GRSYNPDLTG (309 aa)). Residues 179-251 (GDNFRITKAD…FEFDIFTRLF (73 aa)) are EF-hand-like. Positions 232, 234, 236, 238, and 243 each coordinate Ca(2+). The segment at 252–354 (QPWGSILRNW…GRSYNPDLTG (103 aa)) is SH2-like. Arg-297 contributes to the 4-O-phospho-L-tyrosine binding site. Positions 355 to 383 (LCEPTPHDHIKVTQEQYELYCEMGSTFQL) are linker. An RING-type zinc finger spans residues 384–423 (CKICAENDKDVKIEPCGHLMCTSCLTSWQESDGQGCPFCR). 3 disordered regions span residues 481–582 (NERQ…RTCR), 780–831 (FPPA…PPAR), and 857–918 (HSDP…MRPT). Polar residues predominate over residues 483–497 (RQNSPVTSPGSSPLS). 2 stretches are compositionally biased toward pro residues: residues 554 to 576 (LPAP…PIPP) and 821 to 830 (PSQPPPPPPA). Residues 898 to 918 (KASNTKGELLLPNQNLIMRPT) are compositionally biased toward polar residues.

In terms of assembly, interacts with several SH3 domain-containing proteins and with poly-ubiquitinated proteins.

It localises to the cytoplasm. It carries out the reaction S-ubiquitinyl-[E2 ubiquitin-conjugating enzyme]-L-cysteine + [acceptor protein]-L-lysine = [E2 ubiquitin-conjugating enzyme]-L-cysteine + N(6)-ubiquitinyl-[acceptor protein]-L-lysine.. The protein operates within protein modification; protein ubiquitination. E3 ubiquitin-protein ligase which accepts ubiquitin from specific E2 ubiquitin-conjugating enzymes, and transfers it to substrates, generally promoting their degradation by the proteasome. This Xenopus laevis (African clawed frog) protein is E3 ubiquitin-protein ligase CBL-B-A (cblb-a).